A 222-amino-acid polypeptide reads, in one-letter code: GTP cyclohydrolase 1 (222 aa).

Positions 111, 114, and 182 each coordinate Zn(2+).

This sequence belongs to the GTP cyclohydrolase I family. As to quaternary structure, toroid-shaped homodecamer, composed of two pentamers of five dimers.

It carries out the reaction GTP + H2O = 7,8-dihydroneopterin 3'-triphosphate + formate + H(+). Its pathway is cofactor biosynthesis; 7,8-dihydroneopterin triphosphate biosynthesis; 7,8-dihydroneopterin triphosphate from GTP: step 1/1. The sequence is that of GTP cyclohydrolase 1 from Enterobacter sp. (strain 638).